Reading from the N-terminus, the 575-residue chain is Cytoskeleton-associated protein 4 (575 aa).

Positions 1 to 73 (MPSAKQRGSK…RGRSSAATAN (73 aa)) are disordered. The Cytoplasmic segment spans residues 1–85 (MPSAKQRGSK…SASCSRRLGR (85 aa)). Residues S3, S17, and S19 each carry the phosphoserine modification. Residue K21 is modified to N6-acetyllysine. Over residues 37-53 (PAAPQQPQPPAPHPPQH) the composition is skewed to pro residues. C79 carries the S-palmitoyl cysteine; by ZDHHC2 lipid modification. Residues 86–108 (VLNFLFYLSLVAAAAFSGWYVHH) form a helical membrane-spanning segment. At 109 to 575 (VLEEVQQVRR…LKVEKIHEKI (467 aa)) the chain is on the extracellular side. Residues 125 to 193 (RQRDELGQGL…QKLQNEILKD (69 aa)) adopt a coiled-coil conformation. A phosphoserine mark is found at S211, S292, and S367. 2 coiled-coil regions span residues 236 to 438 (DVQK…VGNL) and 507 to 575 (SSLD…HEKI).

Interacts with REEP5. Post-translationally, reversibly palmitoylated. Palmitoylation at Cys-79 by DHHC2 is required for its trafficking from the ER to the plasma membrane and for its perinuclear localization. In terms of processing, increased phosphorylation during mitosis prevents binding to microtubules. As to expression, expressed in cardiomyocytes (at protein level).

It is found in the endoplasmic reticulum membrane. Its subcellular location is the cell membrane. The protein resides in the cytoplasm. It localises to the cytoskeleton. The protein localises to the perinuclear region. Its function is as follows. High-affinity epithelial cell surface receptor for APF. Functionally, mediates the anchoring of the endoplasmic reticulum to microtubules. This is Cytoskeleton-associated protein 4 (Ckap4) from Mus musculus (Mouse).